Consider the following 414-residue polypeptide: Tyrosine--tRNA ligase (414 aa).

Y38 contributes to the L-tyrosine binding site. A 'HIGH' region motif is present at residues 43–52; it reads PTAISLHLGN. 2 residues coordinate L-tyrosine: Y165 and Q169. The short motif at 227 to 231 is the 'KMSKS' region element; sequence KIGKS. K230 serves as a coordination point for ATP. The 65-residue stretch at 349–413 folds into the S4 RNA-binding domain; it reads DDLFLTLVDS…KGKKQYWVIY (65 aa).

This sequence belongs to the class-I aminoacyl-tRNA synthetase family. TyrS type 1 subfamily. Homodimer.

It is found in the cytoplasm. It catalyses the reaction tRNA(Tyr) + L-tyrosine + ATP = L-tyrosyl-tRNA(Tyr) + AMP + diphosphate + H(+). In terms of biological role, catalyzes the attachment of tyrosine to tRNA(Tyr) in a two-step reaction: tyrosine is first activated by ATP to form Tyr-AMP and then transferred to the acceptor end of tRNA(Tyr). The polypeptide is Tyrosine--tRNA ligase (Mycoplasmopsis pulmonis (strain UAB CTIP) (Mycoplasma pulmonis)).